The chain runs to 1030 residues: Kinesin-related protein 6 (1030 aa).

Residues 3–66 (FENDQLYNWL…FHLLQQLKKQ (64 aa)) form the SAM domain. 2 disordered regions span residues 66–164 (QTPP…SDFM) and 178–308 (RQQY…EDDD). Polar residues predominate over residues 68-80 (PPISNTSSPVINS). Composition is skewed to low complexity over residues 81–117 (NNNN…NNNN), 125–164 (TSTS…SDFM), 181–197 (YAKQ…KYQS), and 225–238 (QQQQ…QQQD). The segment covering 239–290 (FEFEEEEEEEDQQQQYDEEEEEEEEYEEDFYKEDLGEIDDGNVLDISDDEPD) has biased composition (acidic residues). In terms of domain architecture, Kinesin motor spans 453–775 (RIRVCVRKRP…LRYADRVKEL (323 aa)). Residue 543-550 (GQTGSGKT) participates in ATP binding. 3 stretches are compositionally biased toward low complexity: residues 826 to 839 (INSQ…TSQP), 849 to 906 (QQQE…QTQP), and 981 to 1009 (PIQQ…QTPQ). Disordered stretches follow at residues 826–915 (INSQ…KIDF) and 981–1030 (PIQQ…SSRN).

Belongs to the TRAFAC class myosin-kinesin ATPase superfamily. Kinesin family.

It localises to the cytoplasm. It is found in the cytoskeleton. Its function is as follows. Microtubule-associated force-producing protein that plays a role in organelle transport. Its motor activity is directed toward the microtubule's plus end. This Dictyostelium discoideum (Social amoeba) protein is Kinesin-related protein 6 (kif6).